A 174-amino-acid polypeptide reads, in one-letter code: uncharacterized protein (174 aa).

The protein belongs to the gamma-class carbonic anhydrase family.

This is an uncharacterized protein from Pseudomonas aeruginosa (strain ATCC 15692 / DSM 22644 / CIP 104116 / JCM 14847 / LMG 12228 / 1C / PRS 101 / PAO1).